Here is a 496-residue protein sequence, read N- to C-terminus: Cobyric acid synthase (496 aa).

In terms of domain architecture, GATase cobBQ-type spans 252–442 (DLAVAVIRLP…LHGCFDSDTY (191 aa)). The active-site Nucleophile is cysteine 333. The active site involves histidine 434.

It belongs to the CobB/CobQ family. CobQ subfamily.

Its pathway is cofactor biosynthesis; adenosylcobalamin biosynthesis. Its function is as follows. Catalyzes amidations at positions B, D, E, and G on adenosylcobyrinic A,C-diamide. NH(2) groups are provided by glutamine, and one molecule of ATP is hydrogenolyzed for each amidation. In Desulforudis audaxviator (strain MP104C), this protein is Cobyric acid synthase.